Here is a 685-residue protein sequence, read N- to C-terminus: MAEGGGSVQRLRRQLESNSFQAEQYVKLLSQQSDGDRDLQEHRQRIQSLADETAQSLKRNVYQNYRQFIETAKEISYLEGEMYQLSHILTEQKSIMESVTQALLYTDRSEAARELQTAFPKEAEEGKVRNLTTLLEKVEGCKNLLETPGRYLVYNGDLTEFDVDNMALIQKVHAFLMNDCLLIATSVPNRRGIYKYNALHNLDDLAVVNVKENPPMKDMFKILMFPESRIFQAENAKIKKEWLEILEQTKKNKALNEKQKQEETTPQLPVVPEIPANPFIDEDGTFDEVEVDLTIDWIQELPEDLDVCIAQRNFEGAVDLLDKLNSYLEDKPLTHPVKELKSKVDERVRQLTDVLVFELSPDRSLRGGPKATRRAVSQLVRLGQSTKACELFLKNQAAAVQTAIRQLRIEGATLLYIHKLCNVFFTSLLETAKEFEMDFAENHGCYSAFIVWSRLALKMFVDAFSKQVFDSKESLSTVAECVKVAKEHCKQLSEIGLDLTFILHTLLVKDIKAALQSYKDIVIEATKHRNSEEMWRRMNLMTPEVLGKLREEMRNCGINNFDQYTGDDCWVNISYTIVAFTKQTMAFLEEALKLYFPELHMVLLECLMEIILVAIQHVDYSLRCEQESEKKAFIRQNASFLYENVLVVVEKRFEEGVGKPAKQLQELRNSSRLVRVNPESTTSVV.

The PH domain occupies Tyr-151 to Lys-251. Residues Ala-254–Glu-263 show a composition bias toward basic and acidic residues. The interval Ala-254–Glu-273 is disordered.

This sequence belongs to the EXO84 family. The exocyst complex is composed of exoc1, exoc2, exoc3, exoc4, exoc5, exoc6, exoc7 and exoc8.

It is found in the cytoplasm. Its subcellular location is the perinuclear region. It localises to the cell projection. The protein resides in the growth cone. In terms of biological role, component of the exocyst complex involved in the docking of exocytic vesicles with fusion sites on the plasma membrane. The sequence is that of Exocyst complex component 8 (exoc8) from Xenopus laevis (African clawed frog).